Consider the following 625-residue polypeptide: tRNA (uracil-5-)-methyltransferase homolog A (625 aa).

Disordered regions lie at residues 1-37 (MSEN…AAPA) and 145-165 (RPKA…EPPV). A compositionally biased stretch (low complexity) spans 27–37 (PTVSVPPAAPA). The region spanning 73–146 (FKLELQNVPR…RPLSVRLARP (74 aa)) is the RRM domain. The stretch at 180–209 (YAEQLERKQLECEQVLQKLAKEIGSTNRAL) forms a coiled coil. The residue at position 378 (S378) is a Phosphoserine. Positions 411, 461, and 510 each coordinate S-adenosyl-L-methionine. C538 serves as the catalytic Nucleophile. E581 serves as the catalytic Proton acceptor. The segment at 594-625 (GTGVLGPHSPPAQPTPGPPDNTLQETGTFPSS) is disordered. The segment covering 601–612 (HSPPAQPTPGPP) has biased composition (pro residues). S602 is subject to Phosphoserine. Positions 614–625 (NTLQETGTFPSS) are enriched in polar residues.

The protein belongs to the class I-like SAM-binding methyltransferase superfamily. RNA M5U methyltransferase family.

The protein localises to the cytoplasm. It is found in the cytosol. It carries out the reaction uridine(54) in tRNA + S-adenosyl-L-methionine = 5-methyluridine(54) in tRNA + S-adenosyl-L-homocysteine + H(+). The enzyme catalyses a uridine in mRNA + S-adenosyl-L-methionine = a 5-methyluridine in mRNA + S-adenosyl-L-homocysteine + H(+). In terms of biological role, S-adenosyl-L-methionine-dependent methyltransferase that catalyzes the formation of 5-methyl-uridine in tRNAs and some mRNAs. Mainly catalyzes the methylation of uridine at position 54 (m5U54) in cytosolic tRNAs. Also able to mediate the formation of 5-methyl-uridine in some mRNAs. This is tRNA (uracil-5-)-methyltransferase homolog A from Homo sapiens (Human).